We begin with the raw amino-acid sequence, 906 residues long: Protein translocase subunit SecA (906 aa).

ATP contacts are provided by residues Q86, 104-108 (GEGKT), and D499. Residues 834 to 847 (KLQKNMRESREDPA) are compositionally biased toward basic and acidic residues. The tract at residues 834–887 (KLQKNMRESREDPAFSKYNAGSSLETDLKPVVSRVDPKDRNPDDPTSWGRVSRN) is disordered. C890, C892, C901, and H902 together coordinate Zn(2+).

This sequence belongs to the SecA family. Monomer and homodimer. Part of the essential Sec protein translocation apparatus which comprises SecA, SecYEG and auxiliary proteins SecDF-YajC and YidC. The cofactor is Zn(2+).

The protein resides in the cell inner membrane. It localises to the cytoplasm. It catalyses the reaction ATP + H2O + cellular proteinSide 1 = ADP + phosphate + cellular proteinSide 2.. Part of the Sec protein translocase complex. Interacts with the SecYEG preprotein conducting channel. Has a central role in coupling the hydrolysis of ATP to the transfer of proteins into and across the cell membrane, serving both as a receptor for the preprotein-SecB complex and as an ATP-driven molecular motor driving the stepwise translocation of polypeptide chains across the membrane. The polypeptide is Protein translocase subunit SecA (Rickettsia felis (strain ATCC VR-1525 / URRWXCal2) (Rickettsia azadi)).